Consider the following 375-residue polypeptide: 23S rRNA (uracil(747)-C(5))-methyltransferase RlmC (375 aa).

[4Fe-4S] cluster is bound by residues Cys-3, Cys-11, Cys-14, and Cys-87. S-adenosyl-L-methionine is bound by residues Gln-212, Phe-241, Glu-262, and Asn-307. The Nucleophile role is filled by Cys-334.

Belongs to the class I-like SAM-binding methyltransferase superfamily. RNA M5U methyltransferase family. RlmC subfamily.

The enzyme catalyses uridine(747) in 23S rRNA + S-adenosyl-L-methionine = 5-methyluridine(747) in 23S rRNA + S-adenosyl-L-homocysteine + H(+). Functionally, catalyzes the formation of 5-methyl-uridine at position 747 (m5U747) in 23S rRNA. In Salmonella agona (strain SL483), this protein is 23S rRNA (uracil(747)-C(5))-methyltransferase RlmC.